Reading from the N-terminus, the 430-residue chain is Elongation factor 1-gamma (430 aa).

The GST N-terminal domain occupies 2-84 (VAGKLYTYPE…YVANETLRGS (83 aa)). The 129-residue stretch at 85–213 (SDLEKAQIIQ…FKLCEKAGEF (129 aa)) folds into the GST C-terminal domain. 2 stretches are compositionally biased toward basic and acidic residues: residues 232-255 (KTEK…KEQE) and 269-278 (PKSKDPFDEM). The interval 232-278 (KTEKAPKAVKAKPEKKEVPKKEQEEPADAAEEALAAEPKSKDPFDEM) is disordered. The 160-residue stretch at 271–430 (SKDPFDEMPK…RKFNQGKIFK (160 aa)) folds into the EF-1-gamma C-terminal domain.

EF-1 is composed of four subunits: alpha, beta, delta, and gamma.

In terms of biological role, probably plays a role in anchoring the complex to other cellular components. In Artemia salina (Brine shrimp), this protein is Elongation factor 1-gamma.